The sequence spans 582 residues: MKKNTVLAVVLSMLVFGGWLYIQQKYFPTEYNVPQKPVAQAQGQNPTSSEIAVQTSSNQISNSMIEAVADSDYPSREQTYVIETDIIRAVFTNKGGDIISYKLKEHASAGSDERVEMIENVTERNRALSLALGGHDAQAVDLLFNVKEESLSDGRKQIGFYRDIKLKNTDGSETVFTLAKRYTFIPGDYMFTLEVTIDGKEGMRGLSFGDSAYTLRSAPQIGPEWDKVNDKYEYRALSYFANEKKKEDRSITDGKTKAVNDLASWVSVSGKYFSFIIIPKDPIQKMFFSGIKEEGAKLHNSQFFISRQPIVGNAAYDQYRVYIGPSSEKILNSYNSAAANNYGYENLRIDSLAASSGFLAPLERVLKFVMEIFYKIIPNWGVALLLLTLLMRIIFFPLTKKSSEATKRMQELQPQINELQQKYKNNPQKLNAEMVKFYKEAGYNPASGCLPLLIQLPFLFAMFGLFNNYFEFRGASFIPGWIPDLSVGDSILKFGFTIPFLNWTDLRLLPIIYTASQLLHGKLTQTPGQSQQNPSMKIMIYFMPLFFFFLFYNAPSGLLLFWTFSNILMLLQQLIINKSMKK.

4 helical membrane-spanning segments follow: residues 4-24 (NTVL…YIQQ), 376-396 (IIPN…IIFF), 446-466 (ASGC…FGLF), and 542-562 (FMPL…LLFW).

Belongs to the OXA1/ALB3/YidC family. Type 1 subfamily. In terms of assembly, interacts with the Sec translocase complex via SecD. Specifically interacts with transmembrane segments of nascent integral membrane proteins during membrane integration.

Its subcellular location is the cell inner membrane. Required for the insertion and/or proper folding and/or complex formation of integral membrane proteins into the membrane. Involved in integration of membrane proteins that insert both dependently and independently of the Sec translocase complex, as well as at least some lipoproteins. Aids folding of multispanning membrane proteins. The sequence is that of Membrane protein insertase YidC from Treponema denticola (strain ATCC 35405 / DSM 14222 / CIP 103919 / JCM 8153 / KCTC 15104).